We begin with the raw amino-acid sequence, 175 residues long: Inorganic pyrophosphatase (175 aa).

3 residues coordinate substrate: Lys-30, Arg-44, and Tyr-56. The Mg(2+) site is built by Asp-66, Asp-71, and Asp-103. Tyr-142 contributes to the substrate binding site.

Belongs to the PPase family. As to quaternary structure, homohexamer. Requires Mg(2+) as cofactor.

Its subcellular location is the cytoplasm. It carries out the reaction diphosphate + H2O = 2 phosphate + H(+). Catalyzes the hydrolysis of inorganic pyrophosphate (PPi) forming two phosphate ions. The sequence is that of Inorganic pyrophosphatase from Ralstonia nicotianae (strain ATCC BAA-1114 / GMI1000) (Ralstonia solanacearum).